Consider the following 248-residue polypeptide: uncharacterized protein (248 aa).

Residues 104 to 122 form a helical membrane-spanning segment; that stretch reads CDVAACVGATWIAGGFAGA.

The protein localises to the membrane. This is an uncharacterized protein from Escherichia coli (strain K12).